The following is a 433-amino-acid chain: Divergent protein kinase domain 2B (433 aa).

A signal peptide spans 1-31 (MEPQLGPEAAALRPGWLALLLWVSALSCSFS). The N-linked (GlcNAc...) asparagine glycan is linked to N100.

The protein belongs to the DIPK family.

It is found in the secreted. The sequence is that of Divergent protein kinase domain 2B from Homo sapiens (Human).